Here is a 255-residue protein sequence, read N- to C-terminus: Uracil-DNA glycosylase (255 aa).

Residue Asp-93 is the Proton acceptor of the active site.

It belongs to the uracil-DNA glycosylase (UDG) superfamily. UNG family.

Its subcellular location is the host nucleus. The enzyme catalyses Hydrolyzes single-stranded DNA or mismatched double-stranded DNA and polynucleotides, releasing free uracil.. Functionally, excises uracil residues from the DNA which can arise as a result of misincorporation of dUMP residues by DNA polymerase or deamination of cytosines. Therefore may reduce deleterious uracil incorporation into the viral genome, particularly in terminally differentiated cells which lack DNA repair enzymes. The protein is Uracil-DNA glycosylase (U81) of Human herpesvirus 6A (strain Uganda-1102) (HHV-6 variant A).